The following is a 785-amino-acid chain: Phosphoinositide phosphatase SAC5 (785 aa).

The SAC domain maps to 158 to 533 (LSVVDLSKNF…GNTLAMQYGG (376 aa)). The Phosphatase catalytic core motif lies at 469–480 (RTNCIDCLDRTN). Over residues 688-700 (GSGQMFQGSSSNS) the composition is skewed to polar residues. The segment at 688-707 (GSGQMFQGSSSNSDSHRPND) is disordered.

As to quaternary structure, component of the PI(3,5)P2 regulatory complex at least composed of ATG18, SAC/FIG4, FAB1 and VAC14. Requires Mg(2+) as cofactor. In terms of tissue distribution, ubiquitous with a higher level of expression in young seedlings than in other tissues.

Its subcellular location is the vacuole membrane. The enzyme catalyses a 1,2-diacyl-sn-glycero-3-phospho-(1D-myo-inositol-3,5-bisphosphate) + H2O = a 1,2-diacyl-sn-glycero-3-phospho-(1D-myo-inositol-3-phosphate) + phosphate. The PI(3,5)P2 regulatory complex regulates both the synthesis and turnover of phosphatidylinositol 3,5-bisphosphate (PtdIns(3,5)P2). The chain is Phosphoinositide phosphatase SAC5 (SAC5) from Arabidopsis thaliana (Mouse-ear cress).